A 197-amino-acid polypeptide reads, in one-letter code: Imidazoleglycerol-phosphate dehydratase (197 aa).

This sequence belongs to the imidazoleglycerol-phosphate dehydratase family.

It localises to the cytoplasm. It catalyses the reaction D-erythro-1-(imidazol-4-yl)glycerol 3-phosphate = 3-(imidazol-4-yl)-2-oxopropyl phosphate + H2O. It functions in the pathway amino-acid biosynthesis; L-histidine biosynthesis; L-histidine from 5-phospho-alpha-D-ribose 1-diphosphate: step 6/9. This is Imidazoleglycerol-phosphate dehydratase from Marinobacter nauticus (strain ATCC 700491 / DSM 11845 / VT8) (Marinobacter aquaeolei).